The following is a 469-amino-acid chain: Serine/threonine-protein kinase orb6 (469 aa).

Residues 93-392 (FSTIKVIGKG…AIEIMQHPFF (300 aa)) form the Protein kinase domain. ATP-binding positions include 99–107 (IGKGAFGEV) and Lys122. The active-site Proton acceptor is the Asp216. In terms of domain architecture, AGC-kinase C-terminal spans 393 to 467 (TGIDWDHIRE…KKFNYLTMKG (75 aa)).

It belongs to the protein kinase superfamily. Ser/Thr protein kinase family. In terms of assembly, interacts with mob2.

It catalyses the reaction L-seryl-[protein] + ATP = O-phospho-L-seryl-[protein] + ADP + H(+). The enzyme catalyses L-threonyl-[protein] + ATP = O-phospho-L-threonyl-[protein] + ADP + H(+). Functionally, interacts with pak1/shk1 and coordinates cell morphogenesis with the cell cycle. It is essential for maintenance of cell polarity and is involved in mitotic control. This Schizosaccharomyces pombe (strain 972 / ATCC 24843) (Fission yeast) protein is Serine/threonine-protein kinase orb6 (orb6).